A 1038-amino-acid chain; its full sequence is Ubiquitin carboxyl-terminal hydrolase 36 (1038 aa).

2 disordered regions span residues 22 to 44 (LGGN…TNGS) and 107 to 148 (ANGH…PKPK). A compositionally biased stretch (polar residues) spans 23-44 (GGNSSAGSSTDQAKSGEDTNGS). The USP domain occupies 172-480 (TGMINVGNTC…NAYIMFFELD (309 aa)). C181 functions as the Nucleophile in the catalytic mechanism. H439 acts as the Proton acceptor in catalysis. Disordered regions lie at residues 487-794 (PAAN…SKTG), 818-881 (GSPV…SNGS), 912-985 (LLVD…YNQN), and 1000-1038 (RFGG…QQQT). Low complexity-rich tracts occupy residues 502–517 (STTP…PSPT), 546–559 (QQNQ…LQLG), and 587–606 (NGNK…KSIN). A phosphoserine mark is found at S513 and S515. Positions 629-641 (TTAQLPSMPNMTE) are enriched in polar residues. Phosphothreonine is present on residues T658 and T662. Residues S672 and S674 each carry the phosphoserine modification. The segment covering 703 to 728 (TNGHSKTNGSHTNGSASSSVHVNNSK) has biased composition (polar residues). The segment covering 729–746 (QKTDAIDEIFKSLKKSAD) has biased composition (basic and acidic residues). S747 bears the Phosphoserine mark. Residues 747 to 756 (SDEDDDEEEP) show a composition bias toward acidic residues. Positions 766–776 (PQKQSQSQSKA) are enriched in low complexity. The segment covering 777 to 786 (PPSPKTPPSP) has biased composition (pro residues). S779 is subject to Phosphoserine. T782 bears the Phosphothreonine mark. Residues S785 and S819 each carry the phosphoserine modification. Residue T825 is modified to Phosphothreonine. The span at 832–844 (NPFSSSKPSTDSP) shows a compositional bias: polar residues. The residue at position 843 (S843) is a Phosphoserine. Phosphothreonine is present on T846. Positions 859-881 (ALKSHQQPRVGNGYQSNATSNGS) are enriched in polar residues. Residues 912–923 (LLVDAREQRQRD) are compositionally biased toward basic and acidic residues. Positions 942-953 (SGSAKGNNASNS) are enriched in low complexity.

This sequence belongs to the peptidase C19 family. Interacts with atms/PAF1, but not with CycT. Interacts (via C-terminus) with imd (via N-terminus).

The protein localises to the nucleus. It is found in the nucleolus. It localises to the cytoplasm. It carries out the reaction Thiol-dependent hydrolysis of ester, thioester, amide, peptide and isopeptide bonds formed by the C-terminal Gly of ubiquitin (a 76-residue protein attached to proteins as an intracellular targeting signal).. Hydrolase that deubiquitinates polyubiquitinated target proteins including imd. Required for preventing the constitutive activation of the imd/NF-kappa-B (Imd) signaling cascade under unchalleneged conditions. Deubiquitinates imd linked 'Lys-63' chains which leads its proteasomal degradation and consequently down-regulation of the Imd signaling cascade. Removal of the activating 'Lys-63'-linked chains is likely to enable their replacement with 'Lys-48'-linked chains which act as 'tags' the for proteasomal degradation of imd. Required for maintaining multiple types of adult stem cells, including male and female germline, epithelial follicle cell and intestinal stem cells. May function as a transcriptional repressor by continually deubiquiting histone H2B at the promoters of genes critical for cellular differentiation, thereby preventing histone H3 'Lys-4' trimethylation (H3K4me3). Controls selective autophagy activation by ubiquitinated proteins. This Drosophila melanogaster (Fruit fly) protein is Ubiquitin carboxyl-terminal hydrolase 36 (scny).